The sequence spans 144 residues: Oxoglutarate dehydrogenase inhibitor (144 aa).

Thr14 carries the post-translational modification Phosphothreonine. Residues 68 to 117 (TAAGRHPDSDIFLDDVTVSRRHAEFRRNGDQYEVVDVGSLNGTYVNREPK) enclose the FHA domain.

The protein localises to the cytoplasm. An essential component of the PknG signaling pathway. When unphosphorylated, it inhibits the activity of 2-oxoglutarate dehydrogenase. When phosphorylated it does not inhibit 2-oxoglutarate dehydrogenase. In Corynebacterium jeikeium (strain K411), this protein is Oxoglutarate dehydrogenase inhibitor (odhI).